A 717-amino-acid chain; its full sequence is Serologically defined colon cancer antigen 8 homolog (717 aa).

Serine 4 and serine 28 each carry phosphoserine. The interval 84 to 115 (QTNKENETSPPRRRKLSPSRPSECDDGSMPTM) is disordered. Coiled-coil stretches lie at residues 129–168 (IHHL…KSQR), 221–278 (DANK…LAAS), 352–590 (EEAN…SEQY), and 622–712 (RSQI…LPSM). Residues 216-717 (TASTGDANKW…QLPSMPQSDC (502 aa)) form a sufficient for homodimerization region.

In terms of assembly, homodimer. Interacts with OFD1; the interaction is direct. Interacts with FAM161A. Interacts with RABEP2, ERC1 and CEP131. In terms of tissue distribution, expressed in liver, kidney, spleen, brain, heart and muscle. Expressed in photoreceptor cells of the retina.

It is found in the cytoplasm. It localises to the cytoskeleton. The protein resides in the microtubule organizing center. The protein localises to the centrosome. Its subcellular location is the centriole. It is found in the cilium basal body. It localises to the cell junction. Plays a role in the establishment of cell polarity and epithelial lumen formation. Also plays an essential role in ciliogenesis and subsequent Hedgehog signaling pathway that requires the presence of intact primary cilia for pathway activation. Mechanistically, interacts with and mediates RABEP2 centrosomal localization which is critical for ciliogenesis. The chain is Serologically defined colon cancer antigen 8 homolog (Sdccag8) from Mus musculus (Mouse).